Here is a 620-residue protein sequence, read N- to C-terminus: UDP-glucose:protein N-beta-glucosyltransferase (620 aa).

Belongs to the glycosyltransferase 41 family. Requires Does not require a metal cofactor. as cofactor.

Its subcellular location is the cytoplasm. The catalysed reaction is L-asparaginyl-[protein] + UDP-alpha-D-glucose = N(4)-(beta-D-glucosyl)-L-asparaginyl-[protein] + UDP + H(+). It functions in the pathway protein modification; protein glycosylation. Inverting glycosyltransferase that catalyzes the transfer of one glucose moiety from UDP-glucose to an asparagine residue in peptides and proteins containing the NX(S/T) motif, resulting in their modification with a beta-linked 1,N-glucose. Likely acts as a key component of a general protein glycosylation system. Also accepts UDP-galactose as a substrate donor, albeit with low efficiency. Cannot use UDP-GlcNAc or UDP-GalNAc as substrate donor. This is UDP-glucose:protein N-beta-glucosyltransferase from Actinobacillus pleuropneumoniae serotype 7 (strain AP76).